A 291-amino-acid polypeptide reads, in one-letter code: 4-diphosphocytidyl-2-C-methyl-D-erythritol kinase (291 aa).

Residue K10 is part of the active site. 100–110 (PIGGGLGGGSS) serves as a coordination point for ATP. The active site involves D142.

Belongs to the GHMP kinase family. IspE subfamily. As to quaternary structure, homodimer.

It carries out the reaction 4-CDP-2-C-methyl-D-erythritol + ATP = 4-CDP-2-C-methyl-D-erythritol 2-phosphate + ADP + H(+). The protein operates within isoprenoid biosynthesis; isopentenyl diphosphate biosynthesis via DXP pathway; isopentenyl diphosphate from 1-deoxy-D-xylulose 5-phosphate: step 3/6. Its function is as follows. Catalyzes the phosphorylation of the position 2 hydroxy group of 4-diphosphocytidyl-2C-methyl-D-erythritol. This is 4-diphosphocytidyl-2-C-methyl-D-erythritol kinase from Hamiltonella defensa subsp. Acyrthosiphon pisum (strain 5AT).